The primary structure comprises 549 residues: Oxygen-dependent choline dehydrogenase (549 aa).

4-33 (DFVIIGSGSAGSALAYRLSEDGRNSVIVLE) contributes to the FAD binding site. Catalysis depends on His465, which acts as the Proton acceptor.

Belongs to the GMC oxidoreductase family. The cofactor is FAD.

The protein localises to the cell membrane. It catalyses the reaction choline + A = betaine aldehyde + AH2. The enzyme catalyses betaine aldehyde + NAD(+) + H2O = glycine betaine + NADH + 2 H(+). It participates in amine and polyamine biosynthesis; betaine biosynthesis via choline pathway; betaine aldehyde from choline (cytochrome c reductase route): step 1/1. Functionally, involved in the biosynthesis of the osmoprotectant glycine betaine. Catalyzes the oxidation of choline to betaine aldehyde and betaine aldehyde to glycine betaine at the same rate. This chain is Oxygen-dependent choline dehydrogenase, found in Rhizobium meliloti (strain 1021) (Ensifer meliloti).